The chain runs to 1418 residues: JmjC domain-containing histone demethylation protein 1 (1418 aa).

Disordered regions lie at residues 1–86 (MIGA…SSST), 102–162 (APLS…STFD), and 308–329 (GADR…SDEN). Residues 44-60 (WIDRGDSQAASYDRDRV) are compositionally biased toward basic and acidic residues. Residues 61–71 (TSNNDVYSSTN) show a composition bias toward polar residues. Residues 127 to 139 (STERPAKRPRSEK) show a composition bias toward basic and acidic residues. The segment covering 143–162 (PLHQPQTTVAPDANPSSTFD) has biased composition (polar residues). Positions 308–321 (GADRASLDVPPRGD) are enriched in basic and acidic residues. A PHD-type zinc finger spans residues 331–391 (QANCAACNLV…KFICRRCRPI (61 aa)). The JmjC domain occupies 588-746 (VSQSKLGKLI…MQIKVAKIEK (159 aa)). Thr-639 contacts substrate. Residues His-642 and Asp-644 each contribute to the Fe cation site. Lys-659 provides a ligand contact to substrate. A Fe cation-binding site is contributed by His-714. Disordered stretches follow at residues 891–964 (PQWT…TVEI), 1090–1118 (NAAT…CDDC), 1130–1195 (YGRI…HTQR), and 1250–1394 (KPTA…DEPD). A compositionally biased stretch (basic and acidic residues) spans 907-925 (LTEKKPAGRPSRRSERNAE). Basic and acidic residues-rich tracts occupy residues 1130-1143 (YGRI…ERSK) and 1186-1195 (AEGDMSHTQR). Residues 1250-1263 (KPTASLVSPPTSQA) show a composition bias toward polar residues. Residues 1341–1352 (SSKKPASRPSSS) show a composition bias toward low complexity.

It belongs to the JHDM1 histone demethylase family. The cofactor is Fe(2+).

The protein resides in the nucleus. The enzyme catalyses N(6),N(6)-dimethyl-L-lysyl(36)-[histone H3] + 2 2-oxoglutarate + 2 O2 = L-lysyl(36)-[histone H3] + 2 formaldehyde + 2 succinate + 2 CO2. In terms of biological role, histone demethylase that specifically demethylates 'Lys-36' of histone H3, thereby playing a central role in histone code. The polypeptide is JmjC domain-containing histone demethylation protein 1 (jhd1) (Aspergillus fumigatus (strain ATCC MYA-4609 / CBS 101355 / FGSC A1100 / Af293) (Neosartorya fumigata)).